Here is a 447-residue protein sequence, read N- to C-terminus: C4-dicarboxylate transport protein 3 (447 aa).

The next 8 helical transmembrane spans lie at 5–27 (TLGK…GVAA), 42–64 (IKLI…IARM), 77–99 (ALVY…VNLV), 146–165 (LARN…GIAL), 186–208 (VFSI…MAFT), 223–245 (LMAT…VARL), 315–337 (IFVA…LGVL), and 352–374 (FITL…VLLL).

The protein belongs to the dicarboxylate/amino acid:cation symporter (DAACS) (TC 2.A.23) family.

The protein localises to the cell inner membrane. Responsible for the transport of dicarboxylates such as succinate, fumarate, and malate from the periplasm across the membrane. The sequence is that of C4-dicarboxylate transport protein 3 (dctA3) from Ralstonia nicotianae (strain ATCC BAA-1114 / GMI1000) (Ralstonia solanacearum).